The following is a 320-amino-acid chain: Small ribosomal subunit protein uS15m (320 aa).

Disordered stretches follow at residues 37-60 (NISQKEKKRKMKQDPYGWAQAQQR) and 214-242 (QSLERPTPPLARGVEPKPQPVRAGPDTGS).

It belongs to the universal ribosomal protein uS15 family. As to quaternary structure, component of the mitochondrial small ribosomal subunit (mt-SSU). Mature N.crassa 74S mitochondrial ribosomes consist of a small (37S) and a large (54S) subunit. The 37S small subunit contains a 16S ribosomal RNA (16S mt-rRNA) and 32 different proteins. The 54S large subunit contains a 23S rRNA (23S mt-rRNA) and 42 different proteins.

It is found in the mitochondrion. In terms of biological role, component of the mitochondrial ribosome (mitoribosome), a dedicated translation machinery responsible for the synthesis of mitochondrial genome-encoded proteins, including at least some of the essential transmembrane subunits of the mitochondrial respiratory chain. The mitoribosomes are attached to the mitochondrial inner membrane and translation products are cotranslationally integrated into the membrane. In Neurospora crassa (strain ATCC 24698 / 74-OR23-1A / CBS 708.71 / DSM 1257 / FGSC 987), this protein is Small ribosomal subunit protein uS15m (mrps28).